The primary structure comprises 102 residues: MRVVIDQDLCGTTGQCVLTLPGTFRQREPDGVAEVCVATVPQALHAAVRLAASQCPVAAIRVIESDAGDDERASADPARSPAEAERHAAKDQRIPGGHDGTV.

Residues Cys-10, Cys-16, and Cys-55 each contribute to the [3Fe-4S] cluster site. Positions 66 to 102 (DAGDDERASADPARSPAEAERHAAKDQRIPGGHDGTV) are disordered. Residues 82-93 (AEAERHAAKDQR) are compositionally biased toward basic and acidic residues.

It depends on [3Fe-4S] cluster as a cofactor.

Its function is as follows. Electron transport protein for the cytochrome systems. This is an uncharacterized protein from Sinorhizobium fredii (strain NBRC 101917 / NGR234).